The following is a 101-amino-acid chain: Gastrin (101 aa).

The signal sequence occupies residues 1-21 (MPRLCVYMLVLVLALATFSEA). The tract at residues 23-101 (WKPRSQLQDA…FGRRSAEEDQ (79 aa)) is disordered. A compositionally biased stretch (polar residues) spans 25–37 (PRSQLQDASSGPG). Sulfotyrosine is present on Y87. F92 is modified (phenylalanine amide). Residues 92–101 (FGRRSAEEDQ) show a composition bias toward basic and acidic residues. Phosphoserine is present on S96. The propeptide occupies 96–101 (SAEEDQ).

Belongs to the gastrin/cholecystokinin family. Sulfation enhances proteolytic processing, and blocks peptide degradation. Levels of sulfation differ between proteolytically-cleaved gastrins and between tissues. As to expression, abundantly expressed in the stomach and duodenum. Low levels in brain, ovary and pancreas.

It localises to the secreted. Gastrin stimulates the stomach mucosa to produce and secrete hydrochloric acid and the pancreas to secrete its digestive enzymes. It also stimulates smooth muscle contraction and increases blood circulation and water secretion in the stomach and intestine. The chain is Gastrin (Gast) from Mus musculus (Mouse).